Consider the following 259-residue polypeptide: Isoepoxydon dehydrogenase patN (259 aa).

Asn-96 and Arg-125 together coordinate NADP(+). Active-site proton donor residues include Ser-143 and Ser-144. NADP(+) is bound by residues Tyr-158, Lys-162, and Ile-191. Tyr-158 acts as the Proton acceptor in catalysis. Residue Lys-162 is the Lowers pKa of active site Tyr of the active site.

Belongs to the short-chain dehydrogenases/reductases (SDR) family.

The protein localises to the cytoplasm. It localises to the cytosol. It catalyses the reaction isoepoxydon + NADP(+) = phyllostine + NADPH + H(+). Its pathway is mycotoxin biosynthesis; patulin biosynthesis. In terms of biological role, isoepoxydon dehydrogenase; part of the gene cluster that mediates the biosynthesis of patulin, an acetate-derived tetraketide mycotoxin produced by several fungal species that shows antimicrobial properties against several bacteria. PatN catalyzes the conversion of isoepoxydon into phyllostine. The pathway begins with the synthesis of 6-methylsalicylic acid by the polyketide synthase (PKS) patK via condensation of acetate and malonate units. The 6-methylsalicylic acid decarboxylase patG then catalyzes the decarboxylation of 6-methylsalicylic acid to yield m-cresol (also known as 3-methylphenol). These first reactions occur in the cytosol. The intermediate m-cresol is then transported into the endoplasmic reticulum where the cytochrome P450 monooxygenase patH converts it to m-hydroxybenzyl alcohol, which is further converted to gentisyl alcohol by the cytochrome P450 monooxygenase patI. The oxidoreductases patJ and patO further convert gentisyl alcohol to isoepoxydon in the vacuole. PatN catalyzes then the transformation of isoepoxydon into phyllostine. The cluster protein patF is responsible for the conversion from phyllostine to neopatulin whereas the alcohol dehydrogenase patD converts neopatulin to E-ascladiol. The steps between isoepoxydon and E-ascladiol occur in the cytosol, and E-ascladiol is probably secreted to the extracellular space by one of the cluster-specific transporters patC or patM. Finally, the secreted patulin synthase patE catalyzes the conversion of E-ascladiol to patulin. The polypeptide is Isoepoxydon dehydrogenase patN (Aspergillus clavatus (strain ATCC 1007 / CBS 513.65 / DSM 816 / NCTC 3887 / NRRL 1 / QM 1276 / 107)).